The following is a 718-amino-acid chain: Polyribonucleotide nucleotidyltransferase (718 aa).

Positions 497 and 503 each coordinate Mg(2+). The KH domain maps to 564 to 623 (PRLLTLKIEPEHIGMVIGPGGKTIKGITEQTSCKIDIADDGTVTIASSEGERAERARQMI). The 69-residue stretch at 633–701 (GEVYLGRVTR…SKGRLNLTRL (69 aa)) folds into the S1 motif domain.

The protein belongs to the polyribonucleotide nucleotidyltransferase family. In terms of assembly, interacts with RNase E (rne). Mg(2+) is required as a cofactor.

The protein localises to the cytoplasm. It catalyses the reaction RNA(n+1) + phosphate = RNA(n) + a ribonucleoside 5'-diphosphate. Involved in mRNA degradation. Catalyzes the phosphorolysis of single-stranded polyribonucleotides processively in the 3'- to 5'-direction. The chain is Polyribonucleotide nucleotidyltransferase from Synechocystis sp. (strain ATCC 27184 / PCC 6803 / Kazusa).